Reading from the N-terminus, the 461-residue chain is Cysteine--tRNA ligase (461 aa).

C28 lines the Zn(2+) pocket. Residues 30 to 40 carry the 'HIGH' region motif; sequence ITVYDLCHIGH. The Zn(2+) site is built by C209, H234, and E238. Residues 266 to 270 carry the 'KMSKS' region motif; sequence KMSKS. Position 269 (K269) interacts with ATP.

Belongs to the class-I aminoacyl-tRNA synthetase family. In terms of assembly, monomer. Zn(2+) is required as a cofactor.

It localises to the cytoplasm. The enzyme catalyses tRNA(Cys) + L-cysteine + ATP = L-cysteinyl-tRNA(Cys) + AMP + diphosphate. This is Cysteine--tRNA ligase from Enterobacter sp. (strain 638).